Reading from the N-terminus, the 279-residue chain is NAD kinase (279 aa).

The active-site Proton acceptor is the D57. Residues 57-58 (DG), 133-134 (NE), R159, D161, and 172-177 (TAYNKS) contribute to the NAD(+) site.

It belongs to the NAD kinase family. A divalent metal cation serves as cofactor.

It is found in the cytoplasm. The catalysed reaction is NAD(+) + ATP = ADP + NADP(+) + H(+). In terms of biological role, involved in the regulation of the intracellular balance of NAD and NADP, and is a key enzyme in the biosynthesis of NADP. Catalyzes specifically the phosphorylation on 2'-hydroxyl of the adenosine moiety of NAD to yield NADP. In Streptococcus pyogenes serotype M28 (strain MGAS6180), this protein is NAD kinase.